A 373-amino-acid polypeptide reads, in one-letter code: Flagellar P-ring protein (373 aa).

The N-terminal stretch at 1 to 26 (MRLLFRFLTLVAVLAMSLADVAPAWA) is a signal peptide.

Belongs to the FlgI family. In terms of assembly, the basal body constitutes a major portion of the flagellar organelle and consists of four rings (L,P,S, and M) mounted on a central rod.

The protein localises to the periplasm. Its subcellular location is the bacterial flagellum basal body. Its function is as follows. Assembles around the rod to form the L-ring and probably protects the motor/basal body from shearing forces during rotation. The polypeptide is Flagellar P-ring protein (Rhizobium etli (strain CIAT 652)).